A 1424-amino-acid chain; its full sequence is ABC multidrug transporter H (1424 aa).

Residues 1 to 49 (MEDQGHLPSEPRALFDRRDDTDSTNTALDETDLSRTPLQDTSHTPHAED) form a disordered region. Polar residues predominate over residues 23–42 (STNTALDETDLSRTPLQDTS). Residues N79 and N275 are each glycosylated (N-linked (GlcNAc...) asparagine). Positions 96–351 (LSQFNIPQHI…MEEQGFVCRE (256 aa)) constitute an ABC transporter 1 domain. A run of 7 helical transmembrane segments spans residues 488 to 508 (GLFI…LLAM), 520 to 540 (VLIK…IAQI), 544 to 564 (IPVL…MVGL), 569 to 589 (GAFF…TALF), 605 to 625 (VSGF…PYHA), 629 to 649 (WFIW…LLSI), and 710 to 730 (NFGI…IATS). The tract at residues 760 to 782 (EEAQLNEKAGHKGTGTDSEAQSN) is disordered. Residues N790 and N798 are each glycosylated (N-linked (GlcNAc...) asparagine). Residues 794–1037 (FTWKNLTYTV…VKDYFARYGA (244 aa)) form the ABC transporter 2 domain. ATP is bound at residue 830-837 (GSSGAGKT). 4 consecutive transmembrane segments (helical) span residues 1131–1151 (IALH…IGDS), 1161–1181 (TIFN…PLFI), 1200–1220 (VAFV…CAVL), and 1240–1260 (AIFF…QFIA). A glycan (N-linked (GlcNAc...) asparagine) is linked at N1265. 2 helical membrane-spanning segments follow: residues 1268-1288 (FAAL…GVLV) and 1300-1320 (WIYW…FSVF). A glycan (N-linked (GlcNAc...) asparagine) is linked at N1338. A helical membrane pass occupies residues 1395 to 1415 (TAIVCIFVLSSYALVYALMKL).

Belongs to the ABC transporter superfamily. ABCG family. PDR (TC 3.A.1.205) subfamily.

It is found in the cell membrane. With respect to regulation, the efflux inhibitor FK506 impairs the transport activity. Its function is as follows. ABC efflux transporter that is able to transport rhodamine 6G (R-6G), a known substrate for many ABC transporters, but seems not to transport azoles. This chain is ABC multidrug transporter H, found in Aspergillus fumigatus (strain ATCC MYA-4609 / CBS 101355 / FGSC A1100 / Af293) (Neosartorya fumigata).